Consider the following 213-residue polypeptide: Glycerol-3-phosphate acyltransferase (213 aa).

6 consecutive transmembrane segments (helical) span residues 2 to 22, 52 to 74, 81 to 100, 112 to 132, 143 to 163, and 164 to 184; these read ITIV…GLWI, AGMA…PIIF, PLIF…FAGF, VIFG…FGAL, VTAS…GFIL, and SNYD…IIIR.

The protein belongs to the PlsY family. Probably interacts with PlsX.

It localises to the cell membrane. It catalyses the reaction an acyl phosphate + sn-glycerol 3-phosphate = a 1-acyl-sn-glycero-3-phosphate + phosphate. It functions in the pathway lipid metabolism; phospholipid metabolism. Catalyzes the transfer of an acyl group from acyl-phosphate (acyl-PO(4)) to glycerol-3-phosphate (G3P) to form lysophosphatidic acid (LPA). This enzyme utilizes acyl-phosphate as fatty acyl donor, but not acyl-CoA or acyl-ACP. The chain is Glycerol-3-phosphate acyltransferase from Streptococcus pneumoniae (strain Hungary19A-6).